The following is a 40-amino-acid chain: Cytolysin EnT (40 aa).

The tract at residues 3-12 (ALAGTIIEGA) is plays an important role in the hemolytic activity. The tract at residues 11 to 30 (GASLTFSVLTTILDALGSVS) is N-terminal region.

Belongs to the actinoporin family. Sea anemone subfamily. In terms of assembly, octamer or nonamer in membranes. Monomer in the soluble state.

The protein resides in the secreted. Its subcellular location is the nematocyst. It is found in the target cell membrane. Pore-forming protein that forms cations-selective hydrophilic pores of around 1 nm and causes cytolysis. Pore formation is a multi-step process that involves specific recognition of membrane sphingomyelin (but neither cholesterol nor phosphatidylcholine) using aromatic rich region and adjacent phosphocholine (POC) binding site, firm binding to the membrane (mainly driven by hydrophobic interactions) accompanied by the transfer of the N-terminal region to the lipid-water interface and finally pore formation after oligomerization of monomers. This toxin shows hemolytic activities. This chain is Cytolysin EnT, found in Entacmaea quadricolor (Bubble-tip anemone).